Reading from the N-terminus, the 580-residue chain is NADH-ubiquinone oxidoreductase chain 5 (580 aa).

16 consecutive transmembrane segments (helical) span residues 12 to 32, 50 to 70, 92 to 112, 113 to 133, 153 to 173, 176 to 196, 218 to 240, 249 to 269, 274 to 294, 300 to 320, 343 to 363, 378 to 400, 427 to 447, 464 to 484, 500 to 520, and 560 to 580; these read FYIL…FLLM, IVMT…VLLI, ILLV…PNLI, SILL…IYFQ, VALL…YIFY, MMKN…AAMT, SALV…FNIL, FLLL…NFEF, IIAL…SIGY, FHLL…GVII, CSCF…AGFY, NFFS…FRLV, IFFL…LMFF, MVCL…FFFI, MWFM…ILGM, and IYLL…LFLN.

The protein belongs to the complex I subunit 5 family.

It is found in the mitochondrion inner membrane. It carries out the reaction a ubiquinone + NADH + 5 H(+)(in) = a ubiquinol + NAD(+) + 4 H(+)(out). In terms of biological role, core subunit of the mitochondrial membrane respiratory chain NADH dehydrogenase (Complex I) that is believed to belong to the minimal assembly required for catalysis. Complex I functions in the transfer of electrons from NADH to the respiratory chain. The immediate electron acceptor for the enzyme is believed to be ubiquinone. This chain is NADH-ubiquinone oxidoreductase chain 5, found in Aedes aegypti (Yellowfever mosquito).